A 787-amino-acid chain; its full sequence is Serine/threonine-protein kinase SCH9 (787 aa).

3 disordered regions span residues 1–82 (MVDF…QSGT), 132–172 (PQQQ…GSSQ), and 238–280 (SPVS…LFGQ). Residues 132 to 155 (PQQQQQQQAQQPPPEQQQSSAPYQ) show a composition bias toward low complexity. Polar residues-rich tracts occupy residues 156-172 (NSAN…GSSQ) and 239-263 (PVSS…SNHG). In terms of domain architecture, C2 spans 182–354 (DKTGNKLSPA…KNNKNESEWL (173 aa)). The Protein kinase domain occupies 392 to 653 (FHFLRLLGKG…ARELKAHPFF (262 aa)). ATP-binding positions include 398–406 (LGKGTFGQV) and K421. D518 acts as the Proton acceptor in catalysis. Residues 654-729 (ADIDWDLLRA…VDDSTMDDHF (76 aa)) form the AGC-kinase C-terminal domain.

This sequence belongs to the protein kinase superfamily. AGC Ser/Thr protein kinase family. cAMP subfamily.

The enzyme catalyses L-seryl-[protein] + ATP = O-phospho-L-seryl-[protein] + ADP + H(+). It carries out the reaction L-threonyl-[protein] + ATP = O-phospho-L-threonyl-[protein] + ADP + H(+). Protein kinase that is part of growth control pathway which is at least partially redundant with the cAMP pathway. Plays a role in filamentous growth and virulence. Prevents hypha formation specifically under hypoxia at high CO(2) levels. Required for chlamydospore formation, distinctive morphological feature of the fungal pathogen C.albicans that can be induced to form in oxygen-limited environments and has been reported in clinical specimens. This Candida albicans (strain SC5314 / ATCC MYA-2876) (Yeast) protein is Serine/threonine-protein kinase SCH9 (SCH9).